A 149-amino-acid polypeptide reads, in one-letter code: MKAVIQRVLNASVSVDDKIVSAIQQGYCILLGVGSDDTPEDVTKLSNKILKLKLFDNAEQPWKSTIADIQGEILCVSQFTLHARVNKGAKPDFHRSMKGPEAIELYEQVVKTLGESLGSDKIKKGVFGAMMNVQLVNNGPVTILYDTKE.

The Gly-cisPro motif, important for rejection of L-amino acids signature appears at 139-140 (GP).

Belongs to the DTD family. Homodimer.

The protein resides in the cytoplasm. The enzyme catalyses glycyl-tRNA(Ala) + H2O = tRNA(Ala) + glycine + H(+). It catalyses the reaction a D-aminoacyl-tRNA + H2O = a tRNA + a D-alpha-amino acid + H(+). In terms of biological role, an aminoacyl-tRNA editing enzyme that deacylates mischarged D-aminoacyl-tRNAs. Also deacylates mischarged glycyl-tRNA(Ala), protecting cells against glycine mischarging by AlaRS. Acts via tRNA-based rather than protein-based catalysis; rejects L-amino acids rather than detecting D-amino acids in the active site. By recycling D-aminoacyl-tRNA to D-amino acids and free tRNA molecules, this enzyme counteracts the toxicity associated with the formation of D-aminoacyl-tRNA entities in vivo and helps enforce protein L-homochirality. The protein is D-aminoacyl-tRNA deacylase (dtd1) of Schizosaccharomyces pombe (strain 972 / ATCC 24843) (Fission yeast).